Consider the following 440-residue polypeptide: L-gulonolactone oxidase (440 aa).

In terms of domain architecture, FAD-binding PCMH-type spans Tyr-17–Gln-187. Residue His-54 is modified to Pros-8alpha-FAD histidine. Residues Phe-253–Ile-273 form a helical membrane-spanning segment.

This sequence belongs to the oxygen-dependent FAD-linked oxidoreductase family. FAD serves as cofactor.

The protein localises to the microsome membrane. Its subcellular location is the endoplasmic reticulum membrane. It catalyses the reaction L-gulono-1,4-lactone + O2 = L-ascorbate + H2O2 + H(+). It participates in cofactor biosynthesis; L-ascorbate biosynthesis via UDP-alpha-D-glucuronate pathway; L-ascorbate from UDP-alpha-D-glucuronate: step 4/4. In terms of biological role, oxidizes L-gulono-1,4-lactone to hydrogen peroxide and L-xylo-hexulonolactone which spontaneously isomerizes to L-ascorbate. This chain is L-gulonolactone oxidase (GULO), found in Bos taurus (Bovine).